The following is a 1018-amino-acid chain: Unconventional myosin-Ig (1018 aa).

Methionine 1 carries the N-acetylmethionine modification. One can recognise a Myosin motor domain in the interval 9–707 (YGKPDFVLLD…TLVTLEQSRA (699 aa)). ATP is bound at residue 102–109 (GESGAGKT). Residues 584 to 606 (MVALVENLASKEPFYVRCIKPNE) are actin-binding. In terms of domain architecture, IQ spans 710 to 739 (IPIIVLLLQKAWRGTLARWRCRRLRAIYTI). One can recognise a TH1 domain in the interval 824–1017 (GLRQDWGCRR…RGSFTLLWPS (194 aa)).

This sequence belongs to the TRAFAC class myosin-kinesin ATPase superfamily. Myosin family. Interacts with calmodulin; via its IQ motifs. In terms of tissue distribution, specifically expressed in hematopoietic cells.

It is found in the cell membrane. Its subcellular location is the cell projection. It localises to the phagocytic cup. Functionally, unconventional myosin required during immune response for detection of rare antigen-presenting cells by regulating T-cell migration. Unconventional myosins are actin-based motor molecules with ATPase activity and serve in intracellular movements. Acts as a regulator of T-cell migration by generating membrane tension, enforcing cell-intrinsic meandering search, thereby enhancing detection of rare antigens during lymph-node surveillance, enabling pathogen eradication. Also required in B-cells, where it regulates different membrane/cytoskeleton-dependent processes. Involved in Fc-gamma receptor (Fc-gamma-R) phagocytosis. Its function is as follows. Constitutes the minor histocompatibility antigen HA-2. More generally, minor histocompatibility antigens (mHags) refer to immunogenic peptide which, when complexed with MHC, can generate an immune response after recognition by specific T-cells. The peptides are derived from polymorphic intracellular proteins, which are cleaved by normal pathways of antigen processing. The binding of these peptides to MHC class I or class II molecules and their expression on the cell surface can stimulate T-cell responses and thereby trigger graft rejection or graft-versus-host disease (GVHD) after hematopoietic stem cell transplantation from HLA-identical sibling donor. GVHD is a frequent complication after bone marrow transplantation (BMT), due to mismatch of minor histocompatibility antigen in HLA-matched sibling marrow transplants. HA-2 is restricted to MHC class I HLA-A*0201. This chain is Unconventional myosin-Ig (MYO1G), found in Homo sapiens (Human).